A 628-amino-acid chain; its full sequence is Neutral/alkaline invertase 1, mitochondrial (628 aa).

Residues 1–35 constitute a mitochondrion transit peptide; that stretch reads MAAAAISHLRRGAPRHARALLYLSTRRFSSSSAAG. Low complexity predominate over residues 79-90; it reads ASSAPPLESPPI. The segment at 79–113 is disordered; it reads ASSAPPLESPPIEELPDDATPPPEEEPGLPAPEKD.

This sequence belongs to the glycosyl hydrolase 100 family. In terms of tissue distribution, expressed in roots, leaf and stems.

The protein resides in the mitochondrion. The enzyme catalyses Hydrolysis of terminal non-reducing beta-D-fructofuranoside residues in beta-D-fructofuranosides.. In terms of biological role, mitochondrial invertase that cleaves sucrose into glucose and fructose. This chain is Neutral/alkaline invertase 1, mitochondrial, found in Oryza sativa subsp. japonica (Rice).